Here is a 313-residue protein sequence, read N- to C-terminus: NF-kappa-B inhibitor delta (313 aa).

ANK repeat units lie at residues 48–83 (EGDT…IREH), 84–113 (KGKT…EPNA), 117–146 (QGRS…QVDL), 152–201 (EGLT…NHTS), 206–236 (SNKT…DLRT), and 243–276 (HGNT…DPTL).

The protein belongs to the NF-kappa-B inhibitor family. Interacts with NFKB1, RELA and RELB; in the nucleus.

The protein localises to the nucleus. Regulates the expression of IL-2, IL-6, and other cytokines through regulation on NF-kappa-B activity. Functions in the regulation of inflammatory responses. Involved in the induction of T helper 17 cells (Th17) differentiation upon recognition of antigen by T cell antigen receptor (TCR). May also regulate TCR-induced negative selection of thymocytes. The chain is NF-kappa-B inhibitor delta (NFKBID) from Homo sapiens (Human).